The primary structure comprises 318 residues: uncharacterized protein (318 aa).

Belongs to the NAD(P)-dependent epimerase/dehydratase family.

This is an uncharacterized protein from Staphylococcus haemolyticus (strain JCSC1435).